Here is a 374-residue protein sequence, read N- to C-terminus: Putative L-lysine 2,3-aminomutase aq_1632 (374 aa).

The region spanning 86 to 314 (HKYPDTALLL…ARVRYVMSHE (229 aa)) is the Radical SAM core domain. Cysteine 100, cysteine 104, and cysteine 107 together coordinate [4Fe-4S] cluster. Lysine 317 is subject to N6-(pyridoxal phosphate)lysine.

It belongs to the radical SAM superfamily. KamA family. [4Fe-4S] cluster serves as cofactor. Requires pyridoxal 5'-phosphate as cofactor.

This Aquifex aeolicus (strain VF5) protein is Putative L-lysine 2,3-aminomutase aq_1632.